The following is a 255-amino-acid chain: Small ribosomal subunit protein uS2 (255 aa).

Positions 233 to 255 (DFVAEEAASEESLEELAEIVEGK) are disordered.

Belongs to the universal ribosomal protein uS2 family.

This chain is Small ribosomal subunit protein uS2, found in Lactococcus lactis subsp. cremoris (strain SK11).